The sequence spans 358 residues: Core-capsid bridging protein (358 aa).

A disordered region spans residues 296–331 (PSITPTPGYRGTTFKPSRTRSTRRRRSVRRRSRRTA). A compositionally biased stretch (basic residues) spans 312-329 (SRTRSTRRRRSVRRRSRR).

This sequence belongs to the adenoviridae core-capsid bridging protein family. As to quaternary structure, monomer. Homodimer. Exists in equilibrium between monomers and dimers in solution. Interacts with the histone-like nucleoprotein; this interactions bridge the virus core to the capsid. Interacts with core protein X; this interactions bridge the virus core to the capsid. Interacts with the endosome lysis protein VI; this interactions bridge the virus core to the capsid. Interacts with the peripentonal hexons. Interacts with host NPM1; this interaction might play a role in virus assembly.

The protein localises to the virion. It is found in the host nucleus. Its subcellular location is the host nucleolus. Associates loosely with the viral DNA to form an outer shell around the nucleoprotein-DNA complex and links it with the capsid by binding the endosome lysis protein. Dissociates from the viral genome during entry. Might be involved in nuclear capsid assembly of the viral particles through its association with NPM1/nucleophosmin. This Human adenovirus F serotype 40 (HAdV-40) protein is Core-capsid bridging protein.